A 220-amino-acid chain; its full sequence is Large ribosomal subunit protein eL15 (220 aa).

Residues 197-207 are compositionally biased toward basic and acidic residues; it reads KKRHEASRGAR. The tract at residues 197–220 is disordered; sequence KKRHEASRGARDPWQIAEKLKEEK.

This sequence belongs to the eukaryotic ribosomal protein eL15 family.

This Desulfurococcus amylolyticus (strain DSM 18924 / JCM 16383 / VKM B-2413 / 1221n) (Desulfurococcus kamchatkensis) protein is Large ribosomal subunit protein eL15.